The sequence spans 670 residues: tRNA 5-methylaminomethyl-2-thiouridine biosynthesis bifunctional protein MnmC (670 aa).

The tract at residues 1–242 (MTFSVQHAEI…KRECLSGLKI (242 aa)) is tRNA (mnm(5)s(2)U34)-methyltransferase. Residues 269–670 (IGGGIASLCA…KKWLKGSKVE (402 aa)) are FAD-dependent cmnm(5)s(2)U34 oxidoreductase.

This sequence in the N-terminal section; belongs to the methyltransferase superfamily. tRNA (mnm(5)s(2)U34)-methyltransferase family. The protein in the C-terminal section; belongs to the DAO family. Requires FAD as cofactor.

The protein localises to the cytoplasm. The enzyme catalyses 5-aminomethyl-2-thiouridine(34) in tRNA + S-adenosyl-L-methionine = 5-methylaminomethyl-2-thiouridine(34) in tRNA + S-adenosyl-L-homocysteine + H(+). Functionally, catalyzes the last two steps in the biosynthesis of 5-methylaminomethyl-2-thiouridine (mnm(5)s(2)U) at the wobble position (U34) in tRNA. Catalyzes the FAD-dependent demodification of cmnm(5)s(2)U34 to nm(5)s(2)U34, followed by the transfer of a methyl group from S-adenosyl-L-methionine to nm(5)s(2)U34, to form mnm(5)s(2)U34. This Haemophilus influenzae (strain PittEE) protein is tRNA 5-methylaminomethyl-2-thiouridine biosynthesis bifunctional protein MnmC.